We begin with the raw amino-acid sequence, 667 residues long: Long-chain-fatty-acid--CoA ligase ACSBG2 (667 aa).

Residues Thr-227–Lys-235, Glu-418–Ser-423, Asp-496, Arg-511, and Arg-624 each bind ATP.

It belongs to the ATP-dependent AMP-binding enzyme family. Bubblegum subfamily. Testis- and brainstem-specific. Expressed in pubertal and adult testis. Enriched in germ cells and Sertoli cells while present at a lower level in Leydig cells. Present in testicular Sertoli cells and large motoneurons in the medulla oblongata and cervical spinal cord (at protein level).

The protein localises to the cytoplasm. It is found in the membrane. It carries out the reaction a long-chain fatty acid + ATP + CoA = a long-chain fatty acyl-CoA + AMP + diphosphate. It catalyses the reaction (5Z,8Z,11Z,14Z)-eicosatetraenoate + ATP + CoA = (5Z,8Z,11Z,14Z)-eicosatetraenoyl-CoA + AMP + diphosphate. The catalysed reaction is hexadecanoate + ATP + CoA = hexadecanoyl-CoA + AMP + diphosphate. The enzyme catalyses (9Z)-octadecenoate + ATP + CoA = (9Z)-octadecenoyl-CoA + AMP + diphosphate. It carries out the reaction (9Z,12Z)-octadecadienoate + ATP + CoA = (9Z,12Z)-octadecadienoyl-CoA + AMP + diphosphate. It catalyses the reaction tetracosanoate + ATP + CoA = tetracosanoyl-CoA + AMP + diphosphate. Its function is as follows. Catalyzes the conversion of fatty acids such as long chain and very long-chain fatty acids to their active form acyl-CoAs for both synthesis of cellular lipids, and degradation via beta-oxidation. Can activate diverse saturated, monosaturated and polyunsaturated fatty acids. Has increased ability to activate oleic and linoleic acid. May play a role in spermatogenesis. This Mus musculus (Mouse) protein is Long-chain-fatty-acid--CoA ligase ACSBG2.